The sequence spans 230 residues: 7-cyano-7-deazaguanine synthase (230 aa).

ATP is bound at residue 14–24 (LSGGLDSTTTL). Residues cysteine 194, cysteine 204, cysteine 207, and cysteine 210 each coordinate Zn(2+).

The protein belongs to the QueC family. Zn(2+) is required as a cofactor.

The catalysed reaction is 7-carboxy-7-deazaguanine + NH4(+) + ATP = 7-cyano-7-deazaguanine + ADP + phosphate + H2O + H(+). Its pathway is purine metabolism; 7-cyano-7-deazaguanine biosynthesis. Functionally, catalyzes the ATP-dependent conversion of 7-carboxy-7-deazaguanine (CDG) to 7-cyano-7-deazaguanine (preQ(0)). The protein is 7-cyano-7-deazaguanine synthase of Vesicomyosocius okutanii subsp. Calyptogena okutanii (strain HA).